A 65-amino-acid polypeptide reads, in one-letter code: uncharacterized protein (65 aa).

The protein resides in the plastid. The protein localises to the chloroplast. This is an uncharacterized protein from Porphyra purpurea (Red seaweed).